We begin with the raw amino-acid sequence, 317 residues long: Ribosome production factor 2 homolog (317 aa).

In terms of domain architecture, Brix spans 28-240 (KTAIFLRGNA…IRRVQPAESD (213 aa)). The interval 287–317 (MKGLKRSVEEREDSENEEVEIEEDVISDASE) is disordered. 4 positions are modified to phosphoserine: Ser-293, Ser-300, Ser-313, and Ser-316. Residues 296-317 (EREDSENEEVEIEEDVISDASE) are compositionally biased toward acidic residues.

It belongs to the RPF2 family. As to quaternary structure, component of a hexameric 5S RNP precursor complex, composed of 5S RNA, rrs1, rpf2, rpl5a/rpl5b, rpl11a/rpl11b and syo1; this complex acts as a precursor for ribosome assembly.

It localises to the nucleus. The protein resides in the nucleolus. This chain is Ribosome production factor 2 homolog, found in Schizosaccharomyces pombe (strain 972 / ATCC 24843) (Fission yeast).